A 167-amino-acid polypeptide reads, in one-letter code: NADH-ubiquinone oxidoreductase chain 6 (167 aa).

4 consecutive transmembrane segments (helical) span residues 24-44 (PYFG…IILA), 54-74 (LLLI…ALVL), 85-105 (VLMK…GGYL), and 135-155 (WLLI…ILEI).

The protein belongs to the complex I subunit 6 family.

It is found in the mitochondrion membrane. It catalyses the reaction a ubiquinone + NADH + 5 H(+)(in) = a ubiquinol + NAD(+) + 4 H(+)(out). In terms of biological role, core subunit of the mitochondrial membrane respiratory chain NADH dehydrogenase (Complex I) that is believed to belong to the minimal assembly required for catalysis. Complex I functions in the transfer of electrons from NADH to the respiratory chain. The immediate electron acceptor for the enzyme is believed to be ubiquinone. The sequence is that of NADH-ubiquinone oxidoreductase chain 6 (MT-ND6) from Myxine glutinosa (Atlantic hagfish).